We begin with the raw amino-acid sequence, 490 residues long: E3 ubiquitin-protein ligase Hakai (490 aa).

The segment at 34–60 (QANKAKPAPRTQRTINRMPAKAPPGDE) is disordered. The segment at 108 to 148 (CDKCGLPIKIYGRMIPCKHVFCYDCAILHEKKGDKMCPGCS) adopts an RING-type zinc-finger fold. Positions 147 to 205 (CSDPVQRIEQCTRGSLFMCSIVQGCKRTYLSQRDLQAHINHRHMRAGKPVTRASLENVH) are HYB domain. Residues 163 to 189 (FMCSIVQGCKRTYLSQRDLQAHINHRH) form a C2H2-type zinc finger. Phosphoserine occurs at positions 200, 284, and 289. The interval 254–490 (QPHEDIRAPP…DQTRYRPYYQ (237 aa)) is disordered. Composition is skewed to pro residues over residues 341-358 (APPPPPPPPISHPMPHPP), 371-388 (APPPPMTSAPPPITPPPG), and 398-422 (MNHPPPGPPPPQHGGPPVTAPPPHH). Residues 426–441 (NSLPQFTEDQGTLSPP) are compositionally biased toward polar residues. Positions 456 to 477 (PRGPPPPPRLQGPPSQTPLPGP) are enriched in pro residues.

This sequence belongs to the Hakai family. As to quaternary structure, homodimer. Interacts with tyrosine-phosphorylated SRC substrates. Component of the WMM complex, a N6-methyltransferase complex composed of a catalytic subcomplex, named MAC, and of an associated subcomplex, named MACOM. The MAC subcomplex is composed of METTL3 and METTL14. The MACOM subcomplex is composed of WTAP, ZC3H13, CBLL1/HAKAI, VIRMA, and, in some cases of RBM15 (RBM15 or RBM15B). Also a component of a MACOM-like complex, named WTAP complex, composed of WTAP, ZC3H13, CBLL1, VIRMA, RBM15, BCLAF1 and THRAP3. Post-translationally, phosphorylated on tyrosine residues.

It localises to the nucleus speckle. It is found in the nucleus. The protein localises to the nucleoplasm. Its subcellular location is the cytoplasm. The enzyme catalyses S-ubiquitinyl-[E2 ubiquitin-conjugating enzyme]-L-cysteine + [acceptor protein]-L-lysine = [E2 ubiquitin-conjugating enzyme]-L-cysteine + N(6)-ubiquitinyl-[acceptor protein]-L-lysine.. It functions in the pathway protein modification; protein ubiquitination. In terms of biological role, E3 ubiquitin-protein ligase that mediates ubiquitination of several tyrosine-phosphorylated Src substrates, including CDH1, CTTN and DOK1. Targets CDH1 for endocytosis and degradation. Associated component of the WMM complex, a complex that mediates N6-methyladenosine (m6A) methylation of RNAs, a modification that plays a role in the efficiency of mRNA splicing and RNA processing. Its function in the WMM complex is unknown. This chain is E3 ubiquitin-protein ligase Hakai, found in Macaca fascicularis (Crab-eating macaque).